A 62-amino-acid chain; its full sequence is Bowman-Birk type proteinase inhibitor B7 (62 aa).

Intrachain disulfides connect C5/C59, C6/C23, C13/C21, C30/C37, and C34/C51.

Belongs to the Bowman-Birk serine protease inhibitor family. As to expression, expressed in bulb (at protein level).

Functionally, serine protease inhibitor. Inhibits trypsin (Ki = 65 nM) and weakly inhibits chymotrypsin (Ki = 295 nM). Does not inhibit bacterial subtilisin. This Hyacinthus orientalis (Common hyacinth) protein is Bowman-Birk type proteinase inhibitor B7.